The chain runs to 289 residues: Fumagillin beta-trans-bergamotene synthase af520 (289 aa).

Helical transmembrane passes span Ala-35–Trp-55, Thr-95–Ile-115, Leu-142–Gly-162, Leu-165–His-185, Ala-222–Val-242, and Tyr-262–Pro-282.

It belongs to the paxB family.

Its subcellular location is the membrane. It carries out the reaction (2E,6E)-farnesyl diphosphate = (+)-exo-beta-bergamotene + diphosphate. Its pathway is secondary metabolite biosynthesis; terpenoid biosynthesis. Its function is as follows. Beta-trans-bergamotene synthase; part of the gene cluster that mediates the biosynthesis of fumagillin, a meroterpenoid that has numerous biological activities including irreversible inhibition of human type 2 methionine aminopeptidase (METAP2). Within the pathway, the membrane-bound fumagillin beta-trans-bergamotene synthase af520 converts farnesyl pyrophosphate (FPP) to beta-trans-bergamotene. The pathway begins with the conversion of FPP to beta-trans-bergamotene by af520. The multifunctional cytochrome P450 monooxygenase af510 then converts beta-trans-bergamotene into 5-keto-demethoxyfumagillol via several oxydation steps. 5-keto-demethoxyfumagillol is then subjected to successive C-6 hydroxylation and O-methylation by the dioxygenase af480 and O-methyltransferase af390-400, respectively, to yield 5-keto-fumagillol, which is then stereoselectively reduced by the keto-reductase af490 to 5R-hydroxy-seco-sesquiterpene. The next step is the polyketide transferase af380-catalyzed transfer of a dodecapentaenoyl group synthesized by the polyketide synthase af370 onto 5R-hydroxy-seco-sesquiterpene which leads to the production of prefumagillin. Finally, oxidative cleavage by the monooxygenase af470 converts prefumagillin to fumagillin. The polypeptide is Fumagillin beta-trans-bergamotene synthase af520 (Aspergillus fumigatus (strain ATCC MYA-4609 / CBS 101355 / FGSC A1100 / Af293) (Neosartorya fumigata)).